Reading from the N-terminus, the 352-residue chain is S-adenosylmethionine:tRNA ribosyltransferase-isomerase (352 aa).

It belongs to the QueA family. Monomer.

It localises to the cytoplasm. It carries out the reaction 7-aminomethyl-7-carbaguanosine(34) in tRNA + S-adenosyl-L-methionine = epoxyqueuosine(34) in tRNA + adenine + L-methionine + 2 H(+). It functions in the pathway tRNA modification; tRNA-queuosine biosynthesis. Its function is as follows. Transfers and isomerizes the ribose moiety from AdoMet to the 7-aminomethyl group of 7-deazaguanine (preQ1-tRNA) to give epoxyqueuosine (oQ-tRNA). The protein is S-adenosylmethionine:tRNA ribosyltransferase-isomerase of Vibrio cholerae serotype O1 (strain ATCC 39541 / Classical Ogawa 395 / O395).